The following is a 388-amino-acid chain: Putative pyridoxal phosphate-dependent aminotransferase EpsN (388 aa).

Position 190 is an N6-(pyridoxal phosphate)lysine (lysine 190).

Belongs to the DegT/DnrJ/EryC1 family. Pyridoxal 5'-phosphate serves as cofactor.

Functionally, may be involved in the production of the exopolysaccharide (EPS) component of the extracellular matrix during biofilm formation. EPS is responsible for the adhesion of chains of cells into bundles. This chain is Putative pyridoxal phosphate-dependent aminotransferase EpsN (epsN), found in Bacillus subtilis (strain 168).